The following is an 81-amino-acid chain: Photosystem I iron-sulfur center (81 aa).

4Fe-4S ferredoxin-type domains lie at 2-31 and 39-68; these read SHSV…MVSW and IASA…VRVY. Positions 11, 14, 17, 21, 48, 51, 54, and 58 each coordinate [4Fe-4S] cluster.

As to quaternary structure, the eukaryotic PSI reaction center is composed of at least 11 subunits. [4Fe-4S] cluster serves as cofactor.

It localises to the plastid. Its subcellular location is the chloroplast thylakoid membrane. It catalyses the reaction reduced [plastocyanin] + hnu + oxidized [2Fe-2S]-[ferredoxin] = oxidized [plastocyanin] + reduced [2Fe-2S]-[ferredoxin]. Functionally, apoprotein for the two 4Fe-4S centers FA and FB of photosystem I (PSI); essential for photochemical activity. FB is the terminal electron acceptor of PSI, donating electrons to ferredoxin. The C-terminus interacts with PsaA/B/D and helps assemble the protein into the PSI complex. Required for binding of PsaD and PsaE to PSI. PSI is a plastocyanin/cytochrome c6-ferredoxin oxidoreductase, converting photonic excitation into a charge separation, which transfers an electron from the donor P700 chlorophyll pair to the spectroscopically characterized acceptors A0, A1, FX, FA and FB in turn. The polypeptide is Photosystem I iron-sulfur center (Rhodomonas salina (Cryptomonas salina)).